A 353-amino-acid polypeptide reads, in one-letter code: Photosystem II protein D1 (353 aa).

Thr-2 carries the N-acetylthreonine modification. Position 2 is a phosphothreonine (Thr-2). The next 3 helical transmembrane spans lie at 29–46 (YIGWFGVLMIPTLLTATS), 118–133 (HFLLGVACYMGREWEL), and 142–156 (WIAVAYSAPVAAATA). His-118 is a binding site for chlorophyll a. Tyr-126 lines the pheophytin a pocket. [CaMn4O5] cluster is bound by residues Asp-170 and Glu-189. A helical transmembrane segment spans residues 197–218 (FHMLGVAGVFGGSLFSAMHGSL). Residue His-198 coordinates chlorophyll a. A quinone is bound by residues His-215 and 264 to 265 (SF). A Fe cation-binding site is contributed by His-215. His-272 contributes to the Fe cation binding site. The helical transmembrane segment at 274–288 (FLAAWPVVGIWFTAL) threads the bilayer. [CaMn4O5] cluster contacts are provided by His-332, Glu-333, Asp-342, and Ala-344. The propeptide occupies 345–353 (AVEAPSTNG).

It belongs to the reaction center PufL/M/PsbA/D family. As to quaternary structure, PSII is composed of 1 copy each of membrane proteins PsbA, PsbB, PsbC, PsbD, PsbE, PsbF, PsbH, PsbI, PsbJ, PsbK, PsbL, PsbM, PsbT, PsbX, PsbY, PsbZ, Psb30/Ycf12, at least 3 peripheral proteins of the oxygen-evolving complex and a large number of cofactors. It forms dimeric complexes. Requires The D1/D2 heterodimer binds P680, chlorophylls that are the primary electron donor of PSII, and subsequent electron acceptors. It shares a non-heme iron and each subunit binds pheophytin, quinone, additional chlorophylls, carotenoids and lipids. D1 provides most of the ligands for the Mn4-Ca-O5 cluster of the oxygen-evolving complex (OEC). There is also a Cl(-1) ion associated with D1 and D2, which is required for oxygen evolution. The PSII complex binds additional chlorophylls, carotenoids and specific lipids. as cofactor. Post-translationally, tyr-161 forms a radical intermediate that is referred to as redox-active TyrZ, YZ or Y-Z. C-terminally processed by CTPA; processing is essential to allow assembly of the oxygen-evolving complex and thus photosynthetic growth.

It localises to the plastid. The protein resides in the chloroplast thylakoid membrane. It catalyses the reaction 2 a plastoquinone + 4 hnu + 2 H2O = 2 a plastoquinol + O2. Its function is as follows. Photosystem II (PSII) is a light-driven water:plastoquinone oxidoreductase that uses light energy to abstract electrons from H(2)O, generating O(2) and a proton gradient subsequently used for ATP formation. It consists of a core antenna complex that captures photons, and an electron transfer chain that converts photonic excitation into a charge separation. The D1/D2 (PsbA/PsbD) reaction center heterodimer binds P680, the primary electron donor of PSII as well as several subsequent electron acceptors. In Nymphaea alba (White water-lily), this protein is Photosystem II protein D1.